The primary structure comprises 52 residues: uncharacterized protein (52 aa).

Residues 3–46 (KIQLESSNQSVLKLEERRLNLTAEIERIYGQMDLKRKELENANL) adopt a coiled-coil conformation.

This is an uncharacterized protein from Dictyostelium discoideum (Social amoeba).